We begin with the raw amino-acid sequence, 40 residues long: Sulfur globule protein TR2 (40 aa).

This sequence to C.vinosum CV3. The protein envelope of the sulfur globules is composed of the three different proteins TR0, TR1 and TR2.

Its function is as follows. Structural protein of the sulfur globules, which are intracellular globules that serve for sulfur storage in purple sulfur bacteria. The polypeptide is Sulfur globule protein TR2 (Thiocapsa roseopersicina).